The primary structure comprises 130 residues: S-adenosylmethionine decarboxylase proenzyme (130 aa).

Catalysis depends on Ser63, which acts as the Schiff-base intermediate with substrate; via pyruvic acid. The residue at position 63 (Ser63) is a Pyruvic acid (Ser); by autocatalysis. Catalysis depends on His68, which acts as the Proton acceptor; for processing activity. Cys83 serves as the catalytic Proton donor; for catalytic activity.

This sequence belongs to the prokaryotic AdoMetDC family. Type 1 subfamily. As to quaternary structure, heterotetramer of two alpha and two beta chains arranged as a dimer of alpha/beta heterodimers. It depends on pyruvate as a cofactor. Is synthesized initially as an inactive proenzyme. Formation of the active enzyme involves a self-maturation process in which the active site pyruvoyl group is generated from an internal serine residue via an autocatalytic post-translational modification. Two non-identical subunits are generated from the proenzyme in this reaction, and the pyruvate is formed at the N-terminus of the alpha chain, which is derived from the carboxyl end of the proenzyme. The post-translation cleavage follows an unusual pathway, termed non-hydrolytic serinolysis, in which the side chain hydroxyl group of the serine supplies its oxygen atom to form the C-terminus of the beta chain, while the remainder of the serine residue undergoes an oxidative deamination to produce ammonia and the pyruvoyl group blocking the N-terminus of the alpha chain.

It catalyses the reaction S-adenosyl-L-methionine + H(+) = S-adenosyl 3-(methylsulfanyl)propylamine + CO2. The protein operates within amine and polyamine biosynthesis; S-adenosylmethioninamine biosynthesis; S-adenosylmethioninamine from S-adenosyl-L-methionine: step 1/1. Catalyzes the decarboxylation of S-adenosylmethionine to S-adenosylmethioninamine (dcAdoMet), the propylamine donor required for the synthesis of the polyamines spermine and spermidine from the diamine putrescine. The polypeptide is S-adenosylmethionine decarboxylase proenzyme (Thermotoga petrophila (strain ATCC BAA-488 / DSM 13995 / JCM 10881 / RKU-1)).